We begin with the raw amino-acid sequence, 459 residues long: Cysteine--tRNA ligase (459 aa).

Position 28 (cysteine 28) interacts with Zn(2+). A 'HIGH' region motif is present at residues valine 30–histidine 40. Zn(2+)-binding residues include cysteine 209, histidine 234, and glutamate 238. Residues lysine 266 to serine 270 carry the 'KMSKS' region motif. Lysine 269 serves as a coordination point for ATP.

It belongs to the class-I aminoacyl-tRNA synthetase family. In terms of assembly, monomer. Zn(2+) serves as cofactor.

It localises to the cytoplasm. It carries out the reaction tRNA(Cys) + L-cysteine + ATP = L-cysteinyl-tRNA(Cys) + AMP + diphosphate. The sequence is that of Cysteine--tRNA ligase from Shewanella loihica (strain ATCC BAA-1088 / PV-4).